The chain runs to 322 residues: Cytochrome f (322 aa).

A signal peptide spans 1-35 (MQTRNTFSWTWIREEITRSISVSLMIYIITWSSIS). Heme contacts are provided by Tyr-38, Cys-58, Cys-61, and His-62. A helical transmembrane segment spans residues 288–308 (VQGLLFFLGSVVLAQIFLVLK).

This sequence belongs to the cytochrome f family. As to quaternary structure, the 4 large subunits of the cytochrome b6-f complex are cytochrome b6, subunit IV (17 kDa polypeptide, petD), cytochrome f and the Rieske protein, while the 4 small subunits are PetG, PetL, PetM and PetN. The complex functions as a dimer. Requires heme as cofactor.

The protein resides in the plastid. Its subcellular location is the chloroplast thylakoid membrane. In terms of biological role, component of the cytochrome b6-f complex, which mediates electron transfer between photosystem II (PSII) and photosystem I (PSI), cyclic electron flow around PSI, and state transitions. The sequence is that of Cytochrome f from Aethionema grandiflorum (Persian stone-cress).